A 258-amino-acid chain; its full sequence is Imidazole glycerol phosphate synthase subunit HisF (258 aa).

Residues Asp11 and Asp130 contribute to the active site.

Belongs to the HisA/HisF family. Heterodimer of HisH and HisF.

The protein localises to the cytoplasm. It catalyses the reaction 5-[(5-phospho-1-deoxy-D-ribulos-1-ylimino)methylamino]-1-(5-phospho-beta-D-ribosyl)imidazole-4-carboxamide + L-glutamine = D-erythro-1-(imidazol-4-yl)glycerol 3-phosphate + 5-amino-1-(5-phospho-beta-D-ribosyl)imidazole-4-carboxamide + L-glutamate + H(+). It functions in the pathway amino-acid biosynthesis; L-histidine biosynthesis; L-histidine from 5-phospho-alpha-D-ribose 1-diphosphate: step 5/9. Functionally, IGPS catalyzes the conversion of PRFAR and glutamine to IGP, AICAR and glutamate. The HisF subunit catalyzes the cyclization activity that produces IGP and AICAR from PRFAR using the ammonia provided by the HisH subunit. The sequence is that of Imidazole glycerol phosphate synthase subunit HisF from Prochlorococcus marinus (strain MIT 9211).